The sequence spans 467 residues: MTELDQFWPACLARLEAELSSQQFNTWIKPLTAEAGDEGIALFAPNRFIMQFIKDRFLPRIEELAVELVGELPVELRLGAPTARPAAPVAGNSQPKAKEPAKAAASAPAAPSPAKQAAVKAIGGSHESTRLNPSFTFDTLVTGKGNQLARAAAMQIAENPGDQAYNPLFVYGGVGLGKTHLIQAIGNHVFQKNPQAKIRYIHAERYVADIMRAYQHKAFDEFKRYYHSLDLLLIDDIQFFAGKNRTQEEFFYAFNALIEGGKQVIMTCDSYPKQIEGMEERLISRFSWGLTVEIQPPELEMRVAILMKKAEADSIKLEHNVAFFIAQNVRSNVRELEGALKRVVAYARFTSQNITLELVKEALKDILAAGNRQVTVDAIQKTVAEYYKIKLSDMHSKKRSRDIARPRQVAMALAKELTQLSLPNIGDAFGGRDHTTVLHACKTITEMRASDADIAHDYEALLSMLRN.

A domain I, interacts with DnaA modulators region spans residues 1 to 79 (MTELDQFWPA…GELPVELRLG (79 aa)). The domain II stretch occupies residues 79-129 (GAPTARPAAPVAGNSQPKAKEPAKAAASAPAAPSPAKQAAVKAIGGSHEST). Residues 84–126 (RPAAPVAGNSQPKAKEPAKAAASAPAAPSPAKQAAVKAIGGSH) form a disordered region. The span at 102-121 (KAAASAPAAPSPAKQAAVKA) shows a compositional bias: low complexity. Residues 130–347 (RLNPSFTFDT…GALKRVVAYA (218 aa)) are domain III, AAA+ region. The ATP site is built by G175, G177, K178, and T179. The segment at 348 to 467 (RFTSQNITLE…YEALLSMLRN (120 aa)) is domain IV, binds dsDNA.

This sequence belongs to the DnaA family. As to quaternary structure, oligomerizes as a right-handed, spiral filament on DNA at oriC.

Its subcellular location is the cytoplasm. Functionally, plays an essential role in the initiation and regulation of chromosomal replication. ATP-DnaA binds to the origin of replication (oriC) to initiate formation of the DNA replication initiation complex once per cell cycle. Binds the DnaA box (a 9 base pair repeat at the origin) and separates the double-stranded (ds)DNA. Forms a right-handed helical filament on oriC DNA; dsDNA binds to the exterior of the filament while single-stranded (ss)DNA is stabiized in the filament's interior. The ATP-DnaA-oriC complex binds and stabilizes one strand of the AT-rich DNA unwinding element (DUE), permitting loading of DNA polymerase. After initiation quickly degrades to an ADP-DnaA complex that is not apt for DNA replication. Binds acidic phospholipids. This chain is Chromosomal replication initiator protein DnaA, found in Chromobacterium violaceum (strain ATCC 12472 / DSM 30191 / JCM 1249 / CCUG 213 / NBRC 12614 / NCIMB 9131 / NCTC 9757 / MK).